Here is a 731-residue protein sequence, read N- to C-terminus: Death domain-associated protein 6 (731 aa).

The interval 1 to 56 (MATDDSIIVLDDDDEDEAAAQPGPSNPASNPVSPGPEASGPSESHGDGGSSNSGSR) is disordered. The necessary for interaction with USP7 and ATRX stretch occupies residues 1–158 (MATDDSIIVL…ASAESSGDNP (158 aa)). Ser25 bears the Phosphoserine mark. Residues 31–43 (PVSPGPEASGPSE) show a composition bias toward low complexity. Lys142 participates in a covalent cross-link: Glycyl lysine isopeptide (Lys-Gly) (interchain with G-Cter in SUMO2). A disordered region spans residues 147–183 (PAASAESSGDNPPTDPPSDLTNTETTASEASRTRGSR). Positions 165–176 (DLTNTETTASEA) are enriched in polar residues. Coiled coils occupy residues 177–215 (SRTR…ELDD) and 368–395 (SRLD…RRAR). The tract at residues 181–414 (GSRRQIQRLE…LPKASSDSGE (234 aa)) is interaction with histone H3.3. At Ser211 the chain carries Phosphoserine. Residues 345 to 560 (GVDPALTDPT…SPVSQLSELD (216 aa)) are necessary for interaction with USP7. The tract at residues 381–639 (QDKSEEGERQ…LGPGPLGNSY (259 aa)) is disordered. The Nuclear localization signal signature appears at 391 to 395 (KRRAR). Positions 398–412 (ATSQSSDLPKASSDS) are enriched in polar residues. Ser409 and Ser421 each carry phosphoserine. The stretch at 428–485 (PKAETEDEEDDEESDDEEEEEEEEEEEATEDEDEDLEQLQEDQDDEEEEEGDNEDDKS) forms a coiled coil. Residues 432–482 (TEDEEDDEESDDEEEEEEEEEEEATEDEDEDLEQLQEDQDDEEEEEGDNED) are compositionally biased toward acidic residues. At Thr456 the chain carries Phosphothreonine. Residues Ser485, Ser488, Ser490, and Ser499 each carry the phosphoserine modification. The segment covering 499-509 (SNPQKGSGPQE) has biased composition (polar residues). The residue at position 503 (Lys503) is an N6-acetyllysine. Ser527, Ser551, and Ser571 each carry phosphoserine. Polar residues predominate over residues 599–608 (VTSTSFNGRV). Ser617 is subject to Phosphoserine. Residues 617–731 (SPPSKRFRKE…EEIIVLSDSD (115 aa)) form an interaction with SPOP region. Lys621 is covalently cross-linked (Glycyl lysine isopeptide (Lys-Gly) (interchain with G-Cter in SUMO1)). The short motif at 622-628 (RFRKEKK) is the Nuclear localization signal element. Phosphoserine occurs at positions 661, 662, 679, 693, 728, and 730. The interval 663 to 688 (PLASVGPVADSSTRVDSPSHELVTSS) is disordered. The span at 672 to 688 (DSSTRVDSPSHELVTSS) shows a compositional bias: polar residues. Positions 724-731 (IIVLSDSD) are sumo interaction motif (SIM).

It belongs to the DAXX family. Homomultimer. Interacts (via C-terminus) with TNFRSF6 (via death domain). Interacts with PAX5, SLC2A4/GLUT4, MAP3K5, TGFBR2, phosphorylated dimeric HSPB1/HSP27, CENPC, ETS1, sumoylated PML, UBE2I, MCRS1 and TP53. Interacts (via N-terminus) with HIPK2 and HIPK3. Interacts with HIPK1, which induces translocation from PML/POD/ND10 nuclear bodies to chromatin and enhances association with HDAC1. Interacts (non-phosphorylated) with PAX3, PAX7, DEK, HDAC1, HDAC2, HDAC3, acetylated histone H4 and histones H2A, H2B, H3, H3.3 and H4. Interacts with SPOP; mediating CUL3-dependent proteasomal degradation. Interacts with CBP; the interaction is dependent the sumoylation of CBP and suppresses CBP transcriptional activity via recruitment of HDAC2 directly in the complex with TP53 and HIPK2. Interacts with AXIN1; the interaction stimulates the interaction of DAXX with TP53, stimulates 'Ser-46' phosphorylation of TP53 on and induces cell death on UV irradiation. Interacts with MDM2; the interaction is direct. Interacts with USP7; the interaction is direct and independent of MDM2 and TP53. Part of a complex with DAXX, MDM2 and USP7 under non-stress conditions. Interacts (via N-terminus) with RASSF1 (via C-terminus); the interaction is independent of MDM2 and TP53; RASSF1 isoform A disrupts interactions among MDM2, DAXX and USP7, thus contributing to the efficient activation of TP53 by promoting MDM2 self-ubiquitination in cell-cycle checkpoint control in response to DNA damage. Interacts with ATRX to form the chromatin remodeling complex ATRX:DAXX. Interacts with HSF1 (via homotrimeric form preferentially); this interaction relieves homotrimeric HSF1 from repression of its transcriptional activity by HSP90-dependent multichaperone complex upon heat shock. In terms of processing, sumoylated with SUMO1 on multiple lysine residues. Post-translationally, repressor activity is down-regulated upon Ser-661 phosphorylation. Upon neuronal activation dephosphorylated by calcineurin in a Ca2+ dependent manner at Ser-661; dephosphorylation positively affects histone H3.3 loading and transcriptional activation. Polyubiquitinated; which is promoted by CUL3 and SPOP and results in proteasomal degradation. Ubiquitinated by MDM2; inducing its degradation. Deubiquitinated by USP7; leading to stabilize it.

Its subcellular location is the cytoplasm. It localises to the nucleus. It is found in the nucleoplasm. The protein localises to the PML body. The protein resides in the nucleolus. Its subcellular location is the chromosome. It localises to the centromere. Functionally, transcription corepressor known to repress transcriptional potential of several sumoylated transcription factors. Down-regulates basal and activated transcription. Its transcription repressor activity is modulated by recruiting it to subnuclear compartments like the nucleolus or PML/POD/ND10 nuclear bodies through interactions with MCSR1 and PML, respectively. Seems to regulate transcription in PML/POD/ND10 nuclear bodies together with PML and may influence TNFRSF6-dependent apoptosis thereby. Inhibits transcriptional activation of PAX3 and ETS1 through direct protein-protein interactions. Modulates PAX5 activity; the function seems to involve CREBBP. Acts as an adapter protein in a MDM2-DAXX-USP7 complex by regulating the RING-finger E3 ligase MDM2 ubiquitination activity. Under non-stress condition, in association with the deubiquitinating USP7, prevents MDM2 self-ubiquitination and enhances the intrinsic E3 ligase activity of MDM2 towards TP53, thereby promoting TP53 ubiquitination and subsequent proteasomal degradation. Upon DNA damage, its association with MDM2 and USP7 is disrupted, resulting in increased MDM2 autoubiquitination and consequently, MDM2 degradation, which leads to TP53 stabilization. Acts as a histone chaperone that facilitates deposition of histone H3.3. Acts as a targeting component of the chromatin remodeling complex ATRX:DAXX which has ATP-dependent DNA translocase activity and catalyzes the replication-independent deposition of histone H3.3 in pericentric DNA repeats outside S-phase and telomeres, and the in vitro remodeling of H3.3-containing nucleosomes. Does not affect the ATPase activity of ATRX but alleviates its transcription repression activity. Upon neuronal activation associates with regulatory elements of selected immediate early genes where it promotes deposition of histone H3.3 which may be linked to transcriptional induction of these genes. Required for the recruitment of histone H3.3:H4 dimers to PML-nuclear bodies (PML-NBs); the process is independent of ATRX and facilitated by ASF1A; PML-NBs are suggested to function as regulatory sites for the incorporation of newly synthesized histone H3.3 into chromatin. Proposed to mediate activation of the JNK pathway and apoptosis via MAP3K5 in response to signaling from TNFRSF6 and TGFBR2. Interaction with HSPB1/HSP27 may prevent interaction with TNFRSF6 and MAP3K5 and block DAXX-mediated apoptosis. In contrast, in lymphoid cells JNC activation and TNFRSF6-mediated apoptosis may not involve DAXX. Plays a role as a positive regulator of the heat shock transcription factor HSF1 activity during the stress protein response. The protein is Death domain-associated protein 6 (Daxx) of Rattus norvegicus (Rat).